The sequence spans 128 residues: Profilin (128 aa).

The protein belongs to the profilin family.

Functionally, more likely to influence phosphoinositide metabolism than actin assembly. The sequence is that of Profilin from Homo sapiens (Human).